The sequence spans 262 residues: Flap endonuclease Xni (262 aa).

Aspartate 105 is a Mg(2+) binding site. The 5'-3' exonuclease domain maps to 164-251 (SQFLDLMALA…NINLKDFRAN (88 aa)). Residues leucine 172, alanine 173, proline 181, isoleucine 183, and isoleucine 186 each contribute to the K(+) site. The interval 185 to 190 (GIGPKS) is interaction with DNA.

Belongs to the Xni family. The cofactor is Mg(2+). Requires K(+) as cofactor.

Its function is as follows. Has flap endonuclease activity. During DNA replication, flap endonucleases cleave the 5'-overhanging flap structure that is generated by displacement synthesis when DNA polymerase encounters the 5'-end of a downstream Okazaki fragment. The protein is Flap endonuclease Xni of Shewanella sp. (strain W3-18-1).